Reading from the N-terminus, the 363-residue chain is Type 3 secretion system translocon protein SctB (363 aa).

Residues 1–16 (MEIQNTKPTQTLYTDI) show a composition bias toward polar residues. A disordered region spans residues 1 to 30 (MEIQNTKPTQTLYTDISTKQTQSSSETQKS). The span at 17–30 (STKQTQSSSETQKS) shows a compositional bias: low complexity. The interval 33–73 (YQQIAAHIPLNVGKNPVLTTTLNDDQLLKLSEQVQHDSEII) is ipgC chaperone binding domain. A helical transmembrane segment spans residues 99 to 120 (ISSLSSNAVSLIISVAVLLSAL).

This sequence belongs to the SctB/SipC family. As to quaternary structure, the core secretion machinery of the T3SS is composed of approximately 20 different proteins, including cytoplasmic components, a base, an export apparatus and a needle. This subunit is involved in the formation of a pore, called the translocon, in host membrane. Interacts with IpaB/SctE. Interacts with the molecular chaperone IpgC, which prevents premature association with IpaB/SctE within the cytoplasm of Shigella cells. Does not interact with CDC42 or RAC1 GTPases in vitro.

The protein localises to the secreted. The protein resides in the host membrane. Interaction with the membrane is affected by the pH. Component of the type III secretion system (T3SS), also called injectisome, which is used to inject bacterial effector proteins into eukaryotic host cells. IpaB/SctE and IpaC/SctB are inserted into the host membrane where they form a pore and allow the translocation of effector proteins into the cytosol of target cells. Induction and secretion of IpaC/SctB comprise the final step in triggering the induction of full type III secretion. Its function is as follows. Required for efficient dissemination. Necessary for lysis of the two cellular membranes that surround bacteria in protrusions during cell-to-cell spread. Contribute to actin nucleation in vitro, which may be a necessary step in Shigella invasion. The sequence is that of Type 3 secretion system translocon protein SctB from Shigella flexneri.